The sequence spans 394 residues: Zinc finger and SCAN domain-containing protein 9 (394 aa).

K26 is covalently cross-linked (Glycyl lysine isopeptide (Lys-Gly) (interchain with G-Cter in SUMO2)). An SCAN box domain is found at 52–134; the sequence is RRHFRQLCYQ…ILLEDLEREL (83 aa). Glycyl lysine isopeptide (Lys-Gly) (interchain with G-Cter in SUMO2) cross-links involve residues K215 and K238. 5 C2H2-type zinc fingers span residues 254–276, 282–304, 310–332, 338–360, and 366–388; these read HKCDECGKSFTQSSGLIRHQRIH, YECNECGKAFSRSSGLFNHRGIH, YHCKECGKVFSQSAGLIQHQRIH, YQCSQCSKSYSRRSFLIEHQRSH, and HQCIECGKSFNRHCNLIRHQKIH.

It belongs to the krueppel C2H2-type zinc-finger protein family.

It is found in the nucleus. May be involved in transcriptional regulation. The protein is Zinc finger and SCAN domain-containing protein 9 (ZSCAN9) of Homo sapiens (Human).